The following is a 230-amino-acid chain: 6-carboxyhexanoate--CoA ligase (230 aa).

The protein belongs to the BioW family. As to quaternary structure, homodimer. Mg(2+) serves as cofactor.

It carries out the reaction heptanedioate + ATP + CoA = 6-carboxyhexanoyl-CoA + AMP + diphosphate. It functions in the pathway metabolic intermediate metabolism; pimeloyl-CoA biosynthesis; pimeloyl-CoA from pimelate: step 1/1. Functionally, catalyzes the transformation of pimelate into pimeloyl-CoA with concomitant hydrolysis of ATP to AMP. The polypeptide is 6-carboxyhexanoate--CoA ligase (Staphylococcus aureus (strain Mu3 / ATCC 700698)).